We begin with the raw amino-acid sequence, 950 residues long: Protein translocase subunit SecA (950 aa).

ATP is bound by residues Gln-87, 105-109, and Asp-524; that span reads GEGKT. Residues 908–932 are disordered; that stretch reads GAAPVPAEARNPNDPSTWGKVGRNE. Cys-934, Cys-936, Cys-945, and His-946 together coordinate Zn(2+).

This sequence belongs to the SecA family. As to quaternary structure, monomer and homodimer. Part of the essential Sec protein translocation apparatus which comprises SecA, SecYEG and auxiliary proteins SecDF-YajC and YidC. It depends on Zn(2+) as a cofactor.

It is found in the cell inner membrane. It localises to the cytoplasm. It carries out the reaction ATP + H2O + cellular proteinSide 1 = ADP + phosphate + cellular proteinSide 2.. In terms of biological role, part of the Sec protein translocase complex. Interacts with the SecYEG preprotein conducting channel. Has a central role in coupling the hydrolysis of ATP to the transfer of proteins into and across the cell membrane, serving both as a receptor for the preprotein-SecB complex and as an ATP-driven molecular motor driving the stepwise translocation of polypeptide chains across the membrane. In Bradyrhizobium sp. (strain BTAi1 / ATCC BAA-1182), this protein is Protein translocase subunit SecA.